Consider the following 308-residue polypeptide: Ribosomal RNA small subunit methyltransferase H (308 aa).

S-adenosyl-L-methionine contacts are provided by residues 36-38, Asp-55, Phe-86, Asp-103, and Gln-110; that span reads GGH.

The protein belongs to the methyltransferase superfamily. RsmH family.

The protein resides in the cytoplasm. The catalysed reaction is cytidine(1402) in 16S rRNA + S-adenosyl-L-methionine = N(4)-methylcytidine(1402) in 16S rRNA + S-adenosyl-L-homocysteine + H(+). Its function is as follows. Specifically methylates the N4 position of cytidine in position 1402 (C1402) of 16S rRNA. The polypeptide is Ribosomal RNA small subunit methyltransferase H (Helicobacter pylori (strain HPAG1)).